A 118-amino-acid chain; its full sequence is Small ribosomal subunit protein uS13 (118 aa).

The interval 94–118 (SLPLRGQRTKTNARTRKGPRKPIRK) is disordered.

It belongs to the universal ribosomal protein uS13 family. In terms of assembly, part of the 30S ribosomal subunit. Forms a loose heterodimer with protein S19. Forms two bridges to the 50S subunit in the 70S ribosome.

Functionally, located at the top of the head of the 30S subunit, it contacts several helices of the 16S rRNA. In the 70S ribosome it contacts the 23S rRNA (bridge B1a) and protein L5 of the 50S subunit (bridge B1b), connecting the 2 subunits; these bridges are implicated in subunit movement. Contacts the tRNAs in the A and P-sites. The protein is Small ribosomal subunit protein uS13 of Shewanella denitrificans (strain OS217 / ATCC BAA-1090 / DSM 15013).